The following is a 183-amino-acid chain: Casparian strip membrane protein 2 (183 aa).

The Cytoplasmic segment spans residues 1–23 (MDSGEQGETSKAPLNKGVSRGVS). The helical transmembrane segment at 24–44 (ILDLILRVIAVISTLASAIAM) threads the bilayer. The Extracellular portion of the chain corresponds to 45–71 (GTTNETLPLFTPFIQFKARYSDLPALT). The N-linked (GlcNAc...) asparagine glycan is linked to Asn48. A helical transmembrane segment spans residues 72-92 (FFVVANSIVSAYLILSLPLSI). At 93-104 (AHIIRSGAKYSR) the chain is on the cytoplasmic side. The helical transmembrane segment at 105–125 (LVLIIFDAAMLALVTAASSAA) threads the bilayer. Over 126-158 (TAIVYLAHKGNVRANWLAICQQLDSFCERTSGS) the chain is Extracellular. Residues 159–179 (LVGSFGAMVLLILLILLSAMA) traverse the membrane as a helical segment. The Cytoplasmic portion of the chain corresponds to 180–183 (LARR).

It belongs to the Casparian strip membrane proteins (CASP) family. Homodimer and heterodimers.

The protein localises to the cell membrane. Its function is as follows. Regulates membrane-cell wall junctions and localized cell wall deposition. Required for establishment of the Casparian strip membrane domain (CSD) and the subsequent formation of Casparian strips, a cell wall modification of the root endodermis that determines an apoplastic barrier between the intraorganismal apoplasm and the extraorganismal apoplasm and prevents lateral diffusion. The polypeptide is Casparian strip membrane protein 2 (Triticum aestivum (Wheat)).